The chain runs to 185 residues: Intraflagellar transport protein 22 homolog (185 aa).

GTP-binding positions include 10–17 (GPCESGKT), 63–67 (DCGGD), and 123–126 (HKPG). Serine 137 carries the post-translational modification Phosphoserine.

This sequence belongs to the small GTPase superfamily. Rab family. In terms of assembly, component of the IFT complex B, at least composed of IFT20, IFT22, IFT25, IFT27, IFT46, IFT52, TRAF3IP1/IFT54, IFT57, IFT74, IFT80, IFT81, and IFT88. Interacts with IFT88. Interacts with CFAP61.

The protein localises to the cell projection. It is found in the cilium. Functionally, small GTPase-like component of the intraflagellar transport (IFT) complex B. The polypeptide is Intraflagellar transport protein 22 homolog (Ift22) (Rattus norvegicus (Rat)).